The sequence spans 207 residues: Cytochrome c biogenesis ATP-binding export protein CcmA (207 aa).

Positions 4-207 (LEARELLCER…RISLTQTRAA (204 aa)) constitute an ABC transporter domain. 36–43 (GSNGAGKT) serves as a coordination point for ATP.

Belongs to the ABC transporter superfamily. CcmA exporter (TC 3.A.1.107) family. In terms of assembly, the complex is composed of two ATP-binding proteins (CcmA) and two transmembrane proteins (CcmB).

It is found in the cell inner membrane. It carries out the reaction heme b(in) + ATP + H2O = heme b(out) + ADP + phosphate + H(+). In terms of biological role, part of the ABC transporter complex CcmAB involved in the biogenesis of c-type cytochromes; once thought to export heme, this seems not to be the case, but its exact role is uncertain. Responsible for energy coupling to the transport system. This chain is Cytochrome c biogenesis ATP-binding export protein CcmA, found in Shigella flexneri.